Here is a 608-residue protein sequence, read N- to C-terminus: Albumin (608 aa).

A signal peptide spans 1-18; sequence MKWVTFLLLLFISGSAFS. Positions 19–24 are excised as a propeptide; it reads RGVFRR. Albumin domains are found at residues 19–211, 212–403, and 404–601; these read RGVF…AVKE, KALV…EFQP, and LVEE…NLVA. Residue His-27 participates in Cu cation binding. Ser-29 carries the phosphoserine modification. 2 residues coordinate Ca(2+): Glu-30 and Asp-37. The cysteines at positions 77 and 86 are disulfide-linked. Ser-89 is modified (phosphoserine). His-91 provides a ligand contact to Zn(2+). Intrachain disulfides connect Cys-99/Cys-115, Cys-114/Cys-125, Cys-148/Cys-193, Cys-192/Cys-201, Cys-224/Cys-270, and Cys-269/Cys-277. Glu-268 serves as a coordination point for Ca(2+). Residues His-271 and Asp-273 each coordinate Zn(2+). The Ca(2+) site is built by Asp-273, Glu-276, and Asp-279. Cystine bridges form between Cys-289–Cys-303, Cys-302–Cys-313, Cys-340–Cys-385, Cys-384–Cys-393, Cys-416–Cys-462, Cys-461–Cys-472, Cys-485–Cys-501, and Cys-500–Cys-511. Ser-297 carries the phosphoserine modification. Ser-443 carries the post-translational modification Phosphoserine. Phosphothreonine occurs at positions 444 and 446. Lys-460 is modified (N6-succinyllysine). Ser-513 is subject to Phosphoserine. 2 disulfide bridges follow: Cys-538/Cys-583 and Cys-582/Cys-591. Lys-543 bears the N6-succinyllysine mark. Lys-558 is subject to N6-methyllysine. Thr-570 is subject to Phosphothreonine. At Lys-588 the chain carries N6-succinyllysine.

The protein belongs to the ALB/AFP/VDB family. In terms of assembly, interacts with FCGRT; this interaction regulates ALB homeostasis. Interacts with TASOR. In plasma, occurs in a covalently-linked complex with chromophore-bound alpha-1-microglobulin; this interaction does not prevent fatty acid binding to ALB. Phosphorylated by FAM20C in the extracellular medium. In terms of tissue distribution, plasma.

It localises to the secreted. Its function is as follows. Binds water, Ca(2+), Na(+), K(+), fatty acids, hormones, bilirubin and drugs. Its main function is the regulation of the colloidal osmotic pressure of blood. Major zinc transporter in plasma, typically binds about 80% of all plasma zinc. Major calcium and magnesium transporter in plasma, binds approximately 45% of circulating calcium and magnesium in plasma. Potentially has more than two calcium-binding sites and might additionally bind calcium in a non-specific manner. The shared binding site between zinc and calcium at residue Asp-273 suggests a crosstalk between zinc and calcium transport in the blood. The rank order of affinity is zinc &gt; calcium &gt; magnesium. Binds to the bacterial siderophore enterobactin and inhibits enterobactin-mediated iron uptake of E.coli from ferric transferrin, and may thereby limit the utilization of iron and growth of enteric bacteria such as E.coli. Does not prevent iron uptake by the bacterial siderophore aerobactin. The protein is Albumin (Alb) of Rattus norvegicus (Rat).